A 78-amino-acid chain; its full sequence is MNISNNAGIDSNDLAKRGESLIRKSTNRYLTTVRIAFRAKQRRFDDFDGLLEESTIKPVQRSIIELSDEQDQPDLLPG.

It belongs to the RNA polymerase subunit omega family. In terms of assembly, in cyanobacteria the RNAP catalytic core is composed of 2 alpha, 1 beta, 1 beta', 1 gamma and 1 omega subunit. When a sigma factor is associated with the core the holoenzyme is formed, which can initiate transcription.

It carries out the reaction RNA(n) + a ribonucleoside 5'-triphosphate = RNA(n+1) + diphosphate. Promotes RNA polymerase assembly. Latches the N- and C-terminal regions of the beta' subunit thereby facilitating its interaction with the beta and alpha subunits. The sequence is that of DNA-directed RNA polymerase subunit omega from Prochlorococcus marinus (strain MIT 9301).